The chain runs to 348 residues: Probable dual-specificity RNA methyltransferase RlmN (348 aa).

Catalysis depends on E93, which acts as the Proton acceptor. The region spanning T99 to N323 is the Radical SAM core domain. C106 and C338 are joined by a disulfide. Residues C113, C117, and C120 each coordinate [4Fe-4S] cluster. Residues G160–E161, S190, S219–H221, and N295 contribute to the S-adenosyl-L-methionine site. The S-methylcysteine intermediate role is filled by C338.

Belongs to the radical SAM superfamily. RlmN family. [4Fe-4S] cluster is required as a cofactor.

It localises to the cytoplasm. The enzyme catalyses adenosine(2503) in 23S rRNA + 2 reduced [2Fe-2S]-[ferredoxin] + 2 S-adenosyl-L-methionine = 2-methyladenosine(2503) in 23S rRNA + 5'-deoxyadenosine + L-methionine + 2 oxidized [2Fe-2S]-[ferredoxin] + S-adenosyl-L-homocysteine. The catalysed reaction is adenosine(37) in tRNA + 2 reduced [2Fe-2S]-[ferredoxin] + 2 S-adenosyl-L-methionine = 2-methyladenosine(37) in tRNA + 5'-deoxyadenosine + L-methionine + 2 oxidized [2Fe-2S]-[ferredoxin] + S-adenosyl-L-homocysteine. Its function is as follows. Specifically methylates position 2 of adenine 2503 in 23S rRNA and position 2 of adenine 37 in tRNAs. The polypeptide is Probable dual-specificity RNA methyltransferase RlmN (Prochlorococcus marinus subsp. pastoris (strain CCMP1986 / NIES-2087 / MED4)).